Consider the following 205-residue polypeptide: Pectinesterase inhibitor 3 (205 aa).

The N-terminal stretch at 1–25 is a signal peptide; sequence MAPTQNLFLVAIAFAVIFTASTVHG. Cystine bridges form between Cys38–Cys47 and Cys104–Cys156.

This sequence belongs to the PMEI family. As to expression, expressed in apical meristem.

It is found in the secreted. Its subcellular location is the extracellular space. It localises to the apoplast. Its function is as follows. Pectin methylesterase (PME) inhibitor that can target PMEs (e.g. PME2 and PME3) in a pH-dependent manner, mainly in slightly acidic conditions (pH 6.3 and 5.0) but not at pH 7.5; this processus relies on changes in the protonation of amino acids involved in intermolecular and intramolecular interactions. Regulates de-methylesterification of pectins in the apical meristem and affects primordia formation and phyllotactic patterning. The polypeptide is Pectinesterase inhibitor 3 (Arabidopsis thaliana (Mouse-ear cress)).